Here is a 207-residue protein sequence, read N- to C-terminus: MARCKS-related protein 1-B (207 aa).

Low complexity-rich tracts occupy residues 1-25 (MGSQASKGGVAVEGKAAAADPAAVK) and 63-77 (AGAGDAIEPAPAAEG). The interval 1-207 (MGSQASKGGV…STPAPSEQKE (207 aa)) is disordered. The N-myristoyl glycine moiety is linked to residue glycine 2. A compositionally biased stretch (basic and acidic residues) spans 78 to 90 (EAAKPEGEATKET). The effector domain involved in lipid-binding stretch occupies residues 93 to 116 (KKKKKFSLKNSFKFKGISLKKSKK). Residues 100–109 (LKNSFKFKGI) show a composition bias toward low complexity. 2 stretches are compositionally biased toward basic and acidic residues: residues 131–154 (TEEKPEENGAATEEKKEEEAKAEE) and 163–182 (PKAEEPAAKAEEPAAAKEEA). The segment covering 195-207 (ETNSTPAPSEQKE) has biased composition (polar residues).

Belongs to the MARCKS family. As to expression, strongly expressed in brain and eye. Also detected at lower levels in muscle.

It localises to the cytoplasm. The protein resides in the cytoskeleton. The protein localises to the cell membrane. In terms of biological role, involved in the control of cell movement by regulating actin cytoskeleton homeostasis and filopodium and lamellipodium formation. This Danio rerio (Zebrafish) protein is MARCKS-related protein 1-B.